The sequence spans 361 residues: MLLWLADLLGSHIRAFNVFNYTTLRAVMAALTALTISLLLGPWVIRKLTELKVGQAVRNDGPQTHLVKAGTPTMGGSLILLAITLTTLLWADLSNKYVWLLLAVMLGTGALGFYDDWRKVVYKDPKGVSAKFKMAWQSAIAIGAGVFLIATAKLPASTELIVPFFKTVAYPLGAVGFCVLTYFVIVGTSNAVNLTDGLDGLAALPTVLVSAGLAIFAYVAGHAVFSKYLGLPFIPGAHEVVVFCAAMCGACLGFLWFNAYPAQVFMGDVGALALGAALGTVAVIVRQEIVLFLMGGLFVMEALSVMIQVTSFKLTGKRVFRMAPLHHHFELKGWKETQVVVRFWIVTMMLVLIGLSTLKLR.

10 helical membrane passes run 25–45 (RAVM…PWVI), 73–93 (TMGG…WADL), 97–117 (YVWL…YDDW), 132–152 (FKMA…IATA), 167–187 (TVAY…VIVG), 200–220 (GLAA…AYVA), 240–260 (VVVF…FNAY), 264–284 (VFMG…VAVI), 289–309 (IVLF…MIQV), and 338–358 (QVVV…LSTL).

It belongs to the glycosyltransferase 4 family. MraY subfamily. Mg(2+) is required as a cofactor.

Its subcellular location is the cell inner membrane. It catalyses the reaction UDP-N-acetyl-alpha-D-muramoyl-L-alanyl-gamma-D-glutamyl-meso-2,6-diaminopimeloyl-D-alanyl-D-alanine + di-trans,octa-cis-undecaprenyl phosphate = di-trans,octa-cis-undecaprenyl diphospho-N-acetyl-alpha-D-muramoyl-L-alanyl-D-glutamyl-meso-2,6-diaminopimeloyl-D-alanyl-D-alanine + UMP. The protein operates within cell wall biogenesis; peptidoglycan biosynthesis. In terms of biological role, catalyzes the initial step of the lipid cycle reactions in the biosynthesis of the cell wall peptidoglycan: transfers peptidoglycan precursor phospho-MurNAc-pentapeptide from UDP-MurNAc-pentapeptide onto the lipid carrier undecaprenyl phosphate, yielding undecaprenyl-pyrophosphoryl-MurNAc-pentapeptide, known as lipid I. The sequence is that of Phospho-N-acetylmuramoyl-pentapeptide-transferase from Chromobacterium violaceum (strain ATCC 12472 / DSM 30191 / JCM 1249 / CCUG 213 / NBRC 12614 / NCIMB 9131 / NCTC 9757 / MK).